Here is a 100-residue protein sequence, read N- to C-terminus: NADH-quinone oxidoreductase subunit K (100 aa).

The next 3 helical transmembrane spans lie at 3–23 (PTSY…VGVI), 29–49 (LVLF…LVTF), and 60–80 (IVVF…LALL).

The protein belongs to the complex I subunit 4L family. NDH-1 is composed of 14 different subunits. Subunits NuoA, H, J, K, L, M, N constitute the membrane sector of the complex.

Its subcellular location is the cell membrane. It catalyses the reaction a quinone + NADH + 5 H(+)(in) = a quinol + NAD(+) + 4 H(+)(out). In terms of biological role, NDH-1 shuttles electrons from NADH, via FMN and iron-sulfur (Fe-S) centers, to quinones in the respiratory chain. The immediate electron acceptor for the enzyme in this species is believed to be ubiquinone. Couples the redox reaction to proton translocation (for every two electrons transferred, four hydrogen ions are translocated across the cytoplasmic membrane), and thus conserves the redox energy in a proton gradient. The polypeptide is NADH-quinone oxidoreductase subunit K (Roseiflexus castenholzii (strain DSM 13941 / HLO8)).